The primary structure comprises 86 residues: Kappa-theraphotoxin-Cg1a 4 (86 aa).

The first 21 residues, 1 to 21 (MKASVLITLAVLGVMFVWASA), serve as a signal peptide directing secretion. A propeptide spanning residues 22–50 (AELEERGSDQRDSPAWLKSMERIFQSEER) is cleaved from the precursor. Intrachain disulfides connect Cys52/Cys66, Cys59/Cys71, and Cys65/Cys78. Phe84 carries the phenylalanine amide modification.

The protein belongs to the neurotoxin 10 (Hwtx-1) family. 28 (Jztx-11) subfamily. Expressed by the venom gland.

The protein localises to the secreted. In terms of biological role, this toxin acts as a voltage-dependent gating-modifier. It inhibits the sodium conductance (IC(50)=124 nM) and slows the fast inactivation (EC(50)=1180 nM) of Nav1.5/SCN5A. It significantly shifts the activation to more depolarized voltages and decreases the deactivation of Nav1.5 currents upon extreme depolarization, but only slightly affects voltage-dependence of steady-state inactivation. In addition, this toxin causes an approximately five-fold decrease in the rate of recovery from inactivation and an approximately 1.9-fold reduction in the closed-state inactivation rate. This toxin integrates the functions of site 3 toxins (alpha-scorpion toxins) with site 4 toxins (beta-scorpion and spider toxins) by targeting multiple sites on Nav1.5. Also shows inhibition of voltage-gated potassium channels (5 uM completely inhibits Kv2.1/KCNB1, whereas 5 uM moderately inhibits Kv4.2/KCND2 Kv4.1/KCND1 channels). The protein is Kappa-theraphotoxin-Cg1a 4 of Chilobrachys guangxiensis (Chinese earth tiger tarantula).